Consider the following 84-residue polypeptide: Toxin To10 (84 aa).

The first 19 residues, 1-19, serve as a signal peptide directing secretion; sequence MNYSTLIAVASLLTAGTES. Residues 21-80 form the LCN-type CS-alpha/beta domain; the sequence is KDGYPVEGSCAFPCGYDNAYCDKLCKERKADSGYCYWVNILCYCYGLPDNAAIKGYGRCK. 4 disulfides stabilise this stretch: Cys-30/Cys-79, Cys-34/Cys-55, Cys-41/Cys-62, and Cys-45/Cys-64. Proline amide is present on Pro-81.

It belongs to the long (4 C-C) scorpion toxin superfamily. Sodium channel inhibitor family. Alpha subfamily. As to expression, expressed by the venom gland.

Its subcellular location is the secreted. Its function is as follows. Alpha toxins bind voltage-independently at site-3 of sodium channels (Nav) and inhibit the inactivation of the activated channels, thereby blocking neuronal transmission. This is Toxin To10 from Tityus obscurus (Amazonian scorpion).